The sequence spans 156 residues: Small ribosomal subunit protein uS7 (156 aa).

It belongs to the universal ribosomal protein uS7 family. In terms of assembly, part of the 30S ribosomal subunit. Contacts proteins S9 and S11.

Its function is as follows. One of the primary rRNA binding proteins, it binds directly to 16S rRNA where it nucleates assembly of the head domain of the 30S subunit. Is located at the subunit interface close to the decoding center, probably blocks exit of the E-site tRNA. The sequence is that of Small ribosomal subunit protein uS7 from Novosphingobium aromaticivorans (strain ATCC 700278 / DSM 12444 / CCUG 56034 / CIP 105152 / NBRC 16084 / F199).